The sequence spans 673 residues: Armadillo repeat-containing protein 8 (673 aa).

The residue at position 2 (Ala2) is an N-acetylalanine. 14 ARM repeats span residues 51 to 92 (NKQK…SLAM), 95 to 134 (ENNV…TIFT), 138 to 176 (TPEE…HCCK), 178 to 217 (PDHQ…VLAF), 224 to 265 (MTLV…YMCR), 269 to 309 (IRTD…YLIE), 313 to 352 (ELQR…HDLK), 374 to 413 (DIRK…SLSR), 416 to 455 (QQLR…NLLL), 458 to 497 (SPSK…NMAF), 501 to 540 (QKIK…NLLS), 543 to 585 (PHID…NIAD), 588 to 627 (TAKE…NLTW), and 634 to 673 (QERQ…QYLA). Position 337 is a phosphoserine (Ser337). Residue Ser512 is modified to Phosphoserine.

In terms of assembly, identified in the CTLH complex that contains GID4, RANBP9 and/or RANBP10, MKLN1, MAEA, RMND5A (or alternatively its paralog RMND5B), GID8, ARMC8, WDR26 and YPEL5. Within this complex, MAEA, RMND5A (or alternatively its paralog RMND5B), GID8, WDR26, and RANBP9 and/or RANBP10 form the catalytic core, while GID4, MKLN1, ARMC8 and YPEL5 have ancillary roles.

Its subcellular location is the nucleus. It is found in the cytoplasm. Its function is as follows. Component of the CTLH E3 ubiquitin-protein ligase complex that selectively accepts ubiquitin from UBE2H and mediates ubiquitination and subsequent proteasomal degradation of the transcription factor HBP1. This is Armadillo repeat-containing protein 8 (Armc8) from Mus musculus (Mouse).